A 156-amino-acid chain; its full sequence is Small ribosomal subunit protein uS7c (156 aa).

The protein belongs to the universal ribosomal protein uS7 family. As to quaternary structure, part of the 30S ribosomal subunit.

It localises to the plastid. It is found in the chloroplast. One of the primary rRNA binding proteins, it binds directly to 16S rRNA where it nucleates assembly of the head domain of the 30S subunit. In Phaeodactylum tricornutum (strain CCAP 1055/1), this protein is Small ribosomal subunit protein uS7c (rps7).